Reading from the N-terminus, the 360-residue chain is S-adenosylmethionine:tRNA ribosyltransferase-isomerase (360 aa).

This sequence belongs to the QueA family. In terms of assembly, monomer.

Its subcellular location is the cytoplasm. It carries out the reaction 7-aminomethyl-7-carbaguanosine(34) in tRNA + S-adenosyl-L-methionine = epoxyqueuosine(34) in tRNA + adenine + L-methionine + 2 H(+). Its pathway is tRNA modification; tRNA-queuosine biosynthesis. Transfers and isomerizes the ribose moiety from AdoMet to the 7-aminomethyl group of 7-deazaguanine (preQ1-tRNA) to give epoxyqueuosine (oQ-tRNA). This Rhizobium meliloti (strain 1021) (Ensifer meliloti) protein is S-adenosylmethionine:tRNA ribosyltransferase-isomerase.